We begin with the raw amino-acid sequence, 300 residues long: NAD kinase (300 aa).

Residue Asp-75 is the Proton acceptor of the active site. NAD(+) contacts are provided by residues 75–76 (DG), 149–150 (ND), Arg-177, Asp-179, 190–195 (TAYALS), Ala-214, and Gln-248.

This sequence belongs to the NAD kinase family. The cofactor is a divalent metal cation.

It is found in the cytoplasm. It carries out the reaction NAD(+) + ATP = ADP + NADP(+) + H(+). Involved in the regulation of the intracellular balance of NAD and NADP, and is a key enzyme in the biosynthesis of NADP. Catalyzes specifically the phosphorylation on 2'-hydroxyl of the adenosine moiety of NAD to yield NADP. The polypeptide is NAD kinase (Burkholderia multivorans (strain ATCC 17616 / 249)).